A 470-amino-acid polypeptide reads, in one-letter code: Cytochrome P450 monooxygenase FUM2 (470 aa).

Residue Cys-414 coordinates heme.

The protein belongs to the cytochrome P450 family. Heme is required as a cofactor.

The protein operates within mycotoxin biosynthesis. Functionally, cytochrome P450 monooxygenase; part of the gene cluster that mediates the biosynthesis of fumonisins B1 (FB1), B2 (FB2), B3 (FB3), and B4 (FB4), which are carcinogenic mycotoxins. Within the pathway, FUM2 performs the C-10 hydroxylation present in FB2 and FB4 and which occurs early in the biosynthesis. The biosynthesis starts with the FUM1-catalyzed carbon chain assembly from one molecule of acetyl-CoA, eight molecules of malonyl-CoA, and two molecules of methionine (in S-adenosyl form). The C18 polyketide chain is released from the enzyme by a nucleophilic attack of a carbanion, which is derived from R-carbon of alanine by decarboxylation, on the carbonyl carbon of polyketide acyl chain. This step is catalyzed by the pyridoxal 5'-phosphate-dependent aminoacyl transferase FUM8. The resultant 3-keto intermediate is then stereospecifically reduced to a 3-hydroxyl product by reductase FUM13. Subsequent oxidations at C-10 by the cytochrome P450 monooxygenase FUM2, C-14 and C-15 by FUM6, FUM12 or FUM15, tricarballylic esterification of the hydroxyl groups on C-14 and C-15 by acyltransferase FUM14, and C-5 hydroxylation by 2-keto-glutarate-dependent dioxygenase FUM3 furnish the biosynthesis of fumonisins. The tricarballylic moieties are most likely derived from the citric acid cycle, and their addition to the carbon backbone may involve FUM7, FUM10, FUM11 and FUM14. This is Cytochrome P450 monooxygenase FUM2 from Gibberella moniliformis (strain M3125 / FGSC 7600) (Maize ear and stalk rot fungus).